The chain runs to 932 residues: Protein translocase subunit SecA (932 aa).

ATP is bound by residues glutamine 87, 105–109 (GEGKT), and aspartate 515. Cysteine 916, cysteine 918, cysteine 927, and histidine 928 together coordinate Zn(2+).

The protein belongs to the SecA family. As to quaternary structure, monomer and homodimer. Part of the essential Sec protein translocation apparatus which comprises SecA, SecYEG and auxiliary proteins SecDF-YajC and YidC. Zn(2+) serves as cofactor.

The protein localises to the cell inner membrane. Its subcellular location is the cytoplasm. The catalysed reaction is ATP + H2O + cellular proteinSide 1 = ADP + phosphate + cellular proteinSide 2.. In terms of biological role, part of the Sec protein translocase complex. Interacts with the SecYEG preprotein conducting channel. Has a central role in coupling the hydrolysis of ATP to the transfer of proteins into and across the cell membrane, serving both as a receptor for the preprotein-SecB complex and as an ATP-driven molecular motor driving the stepwise translocation of polypeptide chains across the membrane. In Burkholderia orbicola (strain AU 1054), this protein is Protein translocase subunit SecA.